Consider the following 225-residue polypeptide: Non-structural protein V (225 aa).

Residues 145 to 157 (SNEPVSSAGSAQD) show a composition bias toward polar residues. The tract at residues 145 to 173 (SNEPVSSAGSAQDPNFKRGGANRERARGN) is disordered. Zn(2+) is bound by residues His-174, Cys-193, Cys-197, Cys-209, Cys-211, Cys-214, Cys-218, and Cys-221.

This sequence belongs to the paramyxoviruses V protein family. Interacts with host IFIH1/MDA5 and DHX58/LGP2. Forms with host DDB1, CUL4A, STAT1 and STAT2 the HPIV2 virus V-dependent complex (VDC); this complex targets host STAT2 to proteasomal degradation.

Its subcellular location is the host nucleus. In terms of biological role, plays an essential role in the inhibition of host immune response. Prevents the establishment of cellular antiviral state by blocking interferon-alpha/beta (IFN-alpha/beta) production and signaling pathway. Interacts with host IFIH1/MDA5 and DHX58/LGP2 to inhibit the transduction pathway involved in the activation of IFN-beta promoter, thus protecting the virus against cell antiviral state. Efficiently blocks type I IFN signaling following infection by targeting host STAT2 for proteasomal degradation. Also plays a role in viral growth by promoting host RhoA-induced F-actin formation. In Homo sapiens (Human), this protein is Non-structural protein V (P/V).